The chain runs to 352 residues: Mitochondrial adenine nucleotide transporter ADNT1 (352 aa).

Solcar repeat units follow at residues 36–123 (KSIC…ASNG), 139–227 (LTPL…LKDW), and 242–343 (LTVV…VKDV). 6 helical membrane-spanning segments follow: residues 41–61 (SLFAGGVAGGVSRTAVAPLER), 100–120 (GTNCARIVPNSAVKFFSYEQA), 145–162 (LGAGATAGIIAMSATYPM), 202–221 (GWLPSVIGVVPYVGLNFSVY), 242–263 (LTVVTRLTCGAIAGTVGQTIAY), and 324–340 (VKVVPSIAIAFVTYEMV).

Belongs to the mitochondrial carrier (TC 2.A.29) family. Expressed in seedling radicles and roots, vasculature of cotyledons, leaf primordia, leaves and sepals.

Its subcellular location is the mitochondrion inner membrane. With respect to regulation, inhibited by pyridoxal 5-phosphate, bathophenanthroline, mersalyl, p-hydroxymercuribenzoate and tannic acid. In terms of biological role, mitochondrial adenylate carrier that catalyzes specifically the transport of ATP, ADP and AMP by a counter-exchange mechanism across the inner mitochondrial membrane. Substrate preference in reconstituted proteoliposomes is ATP &gt; AMP &gt; ADP. May play a role in oxidative phosphorylation and be important for the provision of energy required to support growth in heterotrophic tissues. The sequence is that of Mitochondrial adenine nucleotide transporter ADNT1 (ADNT1) from Arabidopsis thaliana (Mouse-ear cress).